We begin with the raw amino-acid sequence, 148 residues long: Leghemoglobin 29 (148 aa).

In terms of domain architecture, Globin spans Glu-2 to Ser-148. Tyr-30 carries the post-translational modification Nitrated tyrosine. Residue Ser-45 participates in heme b binding. Ser-45 is modified (phosphoserine). His-63 provides a ligand contact to O2. Heme b contacts are provided by His-95 and Lys-98. Tyr-136 is modified (nitrated tyrosine).

Belongs to the plant globin family. In terms of assembly, monomer. In terms of processing, nitrated in effective nodules and particularly in hypoxic conditions; this mechanism may play a protective role in the symbiosis by buffering toxic peroxynitrite NO(2)(-). Nitration level decrease during nodule senescence. Phosphorylation at Ser-45 disrupts the molecular environment of its porphyrin ring oxygen binding pocket, thus leading to a reduced oxygen consumption and to the delivery of oxygen O(2) to symbiosomes. Accumulates in root nodules after inoculation by bacteria of the genus Rhizobium. Expressed in mycorrhizal roots in the presence of the mycorrhizal fungus Glomus fasciculatum.

The protein resides in the cytoplasm. It localises to the cytosol. Its subcellular location is the nucleus. Functionally, leghemoglobin that reversibly binds oxygen O(2) through a pentacoordinated heme iron. In root nodules, facilitates the diffusion of oxygen to the bacteroids while preventing the bacterial nitrogenase from being inactivated by buffering dioxygen, nitric oxide and carbon monoxide, and promoting the formation of reactive oxygen species (ROS, e.g. H(2)O(2)). This role is essential for symbiotic nitrogen fixation (SNF). In Vicia faba (Broad bean), this protein is Leghemoglobin 29.